A 172-amino-acid chain; its full sequence is RNA silencing suppressor p19 (172 aa).

The tract at residues 153–172 is disordered; sequence EGNVSRGSPEGTEAFKEESE.

This sequence belongs to the tombusvirus protein p19 family. As to quaternary structure, homodimer.

Functionally, viral suppressor of RNA silencing which binds specifically to silencing RNAs (siRNAs). Acts as a molecular caliper to specifically select siRNAs based on the length of the duplex region of the RNA. In Pear latent virus (PeLV), this protein is RNA silencing suppressor p19.